Consider the following 291-residue polypeptide: NADH-cytochrome b5 reductase 2 (291 aa).

A helical transmembrane segment spans residues 7–23; that stretch reads PIAATSVVAAAASSYYF. An FAD-binding FR-type domain is found at 41–145; sequence DQWVDLKLKS…KGPIIKYQWQ (105 aa). 148 to 183 lines the FAD pocket; sequence LHKEITLIGAGTGITPLYQLISAINKNPEDKTKVNL.

It belongs to the flavoprotein pyridine nucleotide cytochrome reductase family. The cofactor is FAD.

Its subcellular location is the mitochondrion outer membrane. The catalysed reaction is 2 Fe(III)-[cytochrome b5] + NADH = 2 Fe(II)-[cytochrome b5] + NAD(+) + H(+). Its function is as follows. May mediate the reduction of outer membrane cytochrome b5. The polypeptide is NADH-cytochrome b5 reductase 2 (MCR1) (Yarrowia lipolytica (strain CLIB 122 / E 150) (Yeast)).